Reading from the N-terminus, the 248-residue chain is 14-3-3 protein homolog 2 (248 aa).

Belongs to the 14-3-3 family.

In Echinococcus multilocularis (Fox tapeworm), this protein is 14-3-3 protein homolog 2.